Consider the following 84-residue polypeptide: MRSSSKIKIDPSQHELVPKHEVLSIEEAYKILKELGIKPEQLPWIRASDPIAKLVGAKPGDIIKITRKSSLSGEVVVYRYVISG.

This sequence belongs to the archaeal Rpo5/eukaryotic RPB5 RNA polymerase subunit family. In terms of assembly, part of the RNA polymerase complex.

The protein localises to the cytoplasm. It carries out the reaction RNA(n) + a ribonucleoside 5'-triphosphate = RNA(n+1) + diphosphate. Its function is as follows. DNA-dependent RNA polymerase (RNAP) catalyzes the transcription of DNA into RNA using the four ribonucleoside triphosphates as substrates. In Sulfurisphaera tokodaii (strain DSM 16993 / JCM 10545 / NBRC 100140 / 7) (Sulfolobus tokodaii), this protein is DNA-directed RNA polymerase subunit Rpo5.